We begin with the raw amino-acid sequence, 318 residues long: MGMSDIMWLDVSWAWLVLTAVLLAAAVFYLYTLILSHLAKTTVRNKVVLITDSLSTVGNECAKLFHAGGARLILCGSNWEKLEALAEQLTSQSDPTLTFPPKLVELDFSDMESVPEVISEILECFCCLDVLVFNSSMKLKAPVHSLSLQMDRLLMDVNYFGPITLVKGFLPSLISRRSGHILLVNSIQGKLAMPFRTTYAASKHAVQAFFECLRAEVQEYGITVSTINHTFIKTSSSIPKDEITARSMKTDHRQTPLGVSPKDVATELLRTLSSKKKEILMARWVPKAALYVRSLFPNLFFAIMAARVSNTVAETPDD.

An N-terminal signal peptide occupies residues Met1–Thr32. Residue Leu49–Ile73 coordinates NAD(+). Ser186 lines the substrate pocket. Tyr199 serves as the catalytic Proton acceptor.

The protein belongs to the short-chain dehydrogenases/reductases (SDR) family.

Its subcellular location is the secreted. Functionally, putative oxidoreductase. This Danio rerio (Zebrafish) protein is Dehydrogenase/reductase SDR family member 7C-B (dhrs7cb).